The following is a 560-amino-acid chain: DNA ligase B (560 aa).

Residue Lys124 is the N6-AMP-lysine intermediate of the active site.

The protein belongs to the NAD-dependent DNA ligase family. LigB subfamily.

The catalysed reaction is NAD(+) + (deoxyribonucleotide)n-3'-hydroxyl + 5'-phospho-(deoxyribonucleotide)m = (deoxyribonucleotide)n+m + AMP + beta-nicotinamide D-nucleotide.. Functionally, catalyzes the formation of phosphodiester linkages between 5'-phosphoryl and 3'-hydroxyl groups in double-stranded DNA using NAD as a coenzyme and as the energy source for the reaction. This chain is DNA ligase B, found in Escherichia coli O17:K52:H18 (strain UMN026 / ExPEC).